A 235-amino-acid chain; its full sequence is Octanoyltransferase LIP2, mitochondrial (235 aa).

A mitochondrion-targeting transit peptide spans Met-1–Lys-32. A BPL/LPL catalytic domain is found at His-34–Asp-218. Substrate is bound by residues Arg-79–His-86, Ala-147–Gly-149, and Gly-160–Ala-162. The Acyl-thioester intermediate role is filled by Cys-178.

This sequence belongs to the LipB family. Expressed in leaves. Expressed in roots, rosette leaves, cauline leaves, stems and siliques.

The protein localises to the mitochondrion. The catalysed reaction is octanoyl-[ACP] + L-lysyl-[protein] = N(6)-octanoyl-L-lysyl-[protein] + holo-[ACP] + H(+). It functions in the pathway protein modification; protein lipoylation via endogenous pathway; protein N(6)-(lipoyl)lysine from octanoyl-[acyl-carrier-protein]: step 1/2. Catalyzes the transfer of endogenously produced octanoic acid from octanoyl-acyl-carrier-protein onto the lipoyl domains of lipoate-dependent enzymes. Lipoyl-ACP can also act as a substrate although octanoyl-ACP is likely to be the physiological substrate. Together with LIP1 is essential for mitochondrial protein lipoylation during seed development. Required for the lipoylation of mitochondrial 2-oxoglutarate dehydrogenase component E2 proteins in leaves and roots. The sequence is that of Octanoyltransferase LIP2, mitochondrial from Arabidopsis thaliana (Mouse-ear cress).